A 251-amino-acid polypeptide reads, in one-letter code: Flap endonuclease Xni (251 aa).

Residue D104 participates in Mg(2+) binding. Residues 160-249 enclose the 5'-3' exonuclease domain; sequence VQPQQLPDYW…IDGNLQQLRL (90 aa). K(+) contacts are provided by L171, A172, P180, V182, and I185. The segment at 184 to 189 is interaction with DNA; it reads GIGPKS.

It belongs to the Xni family. Requires Mg(2+) as cofactor. K(+) is required as a cofactor.

In terms of biological role, has flap endonuclease activity. During DNA replication, flap endonucleases cleave the 5'-overhanging flap structure that is generated by displacement synthesis when DNA polymerase encounters the 5'-end of a downstream Okazaki fragment. This chain is Flap endonuclease Xni, found in Escherichia coli O7:K1 (strain IAI39 / ExPEC).